The sequence spans 199 residues: Pyridoxine/pyridoxamine 5'-phosphate oxidase (199 aa).

FMN is bound by residues 44-49, 59-60, K66, and Q91; these read RTVLLK and YT. K49 provides a ligand contact to substrate. Y109, R113, and S117 together coordinate substrate. Residues 126–127 and W171 each bind FMN; that span reads QS. 177-179 is a binding site for substrate; that stretch reads RLH. Position 181 (R181) interacts with FMN.

This sequence belongs to the pyridoxamine 5'-phosphate oxidase family. Homodimer. It depends on FMN as a cofactor.

The catalysed reaction is pyridoxamine 5'-phosphate + O2 + H2O = pyridoxal 5'-phosphate + H2O2 + NH4(+). The enzyme catalyses pyridoxine 5'-phosphate + O2 = pyridoxal 5'-phosphate + H2O2. Its pathway is cofactor metabolism; pyridoxal 5'-phosphate salvage; pyridoxal 5'-phosphate from pyridoxamine 5'-phosphate: step 1/1. The protein operates within cofactor metabolism; pyridoxal 5'-phosphate salvage; pyridoxal 5'-phosphate from pyridoxine 5'-phosphate: step 1/1. In terms of biological role, catalyzes the oxidation of either pyridoxine 5'-phosphate (PNP) or pyridoxamine 5'-phosphate (PMP) into pyridoxal 5'-phosphate (PLP). This chain is Pyridoxine/pyridoxamine 5'-phosphate oxidase, found in Xanthomonas axonopodis pv. citri (strain 306).